The primary structure comprises 208 residues: Proheparin-binding EGF-like growth factor (208 aa).

The signal sequence occupies residues 1 to 23 (MKLLPSVVLKLFLAAVLSALVTG). A propeptide spanning residues 24 to 62 (ESLERLRRGLAAATSNPDPPTGTTNQLLPTGADRAQEVQ) is cleaved from the precursor. Residues 24 to 160 (ESLERLRRGL…ENPLYTYDHT (137 aa)) lie on the Extracellular side of the membrane. The interval 82 to 103 (ALATPGKEKNGKKKRKGKGLGK) is disordered. T85 carries O-linked (GalNAc...) threonine glycosylation. Residues 91–102 (NGKKKRKGKGLG) are compositionally biased toward basic residues. Positions 104–144 (KRDPCLKKYKDYCIHGECRYLKELRIPSCHCLPGYHGQRCH) constitute an EGF-like domain. Intrachain disulfides connect C108-C121, C116-C132, and C134-C143. Residues 149–208 (PVENPLYTYDHTTVLAVVAVVLSSVCLLVIVGLLMFRYHRRGGYDLESEEKVKLGMASSH) constitute a propeptide, C-terminal. Residues 161–184 (TVLAVVAVVLSSVCLLVIVGLLMF) traverse the membrane as a helical segment. The Cytoplasmic segment spans residues 185–208 (RYHRRGGYDLESEEKVKLGMASSH).

As to quaternary structure, interacts with FBLN1. Interacts with EGFR and ERBB4. In terms of processing, O-glycosylated. In terms of tissue distribution, most abundant in skeletal muscle, lung, spleen brain and heart.

Its subcellular location is the secreted. It localises to the extracellular space. The protein localises to the cell membrane. Growth factor that mediates its effects via EGFR, ERBB2 and ERBB4. Required for normal cardiac valve formation and normal heart function. Promotes smooth muscle cell proliferation. May be involved in macrophage-mediated cellular proliferation. It is mitogenic for fibroblasts, but not endothelial cells. It is able to bind EGF receptor/EGFR with higher affinity than EGF itself and is a far more potent mitogen for smooth muscle cells than EGF. Also acts as a diphtheria toxin receptor. The polypeptide is Proheparin-binding EGF-like growth factor (Hbegf) (Rattus norvegicus (Rat)).